Here is a 614-residue protein sequence, read N- to C-terminus: Acetylcholinesterase (614 aa).

The signal sequence occupies residues methionine 1–alanine 31. Residues cysteine 100 and cysteine 127 are joined by a disulfide bond. The Acyl-ester intermediate role is filled by serine 234. A disulfide bridge links cysteine 288 with cysteine 303. N-linked (GlcNAc...) asparagine glycosylation is present at asparagine 296. The Charge relay system role is filled by glutamate 365. Asparagine 381 is a glycosylation site (N-linked (GlcNAc...) asparagine). A disulfide bond links cysteine 440 and cysteine 560. Residue histidine 478 is the Charge relay system of the active site. Asparagine 495 carries an N-linked (GlcNAc...) asparagine glycan.

This sequence belongs to the type-B carboxylesterase/lipase family. In terms of assembly, homotetramer; composed of disulfide-linked homodimers. Catalytic forms H (GPI-anchor dimer) and T (asymmetric collagen-tailed), which differ in their C-terminus, account for all types of known ACHE forms. Interacts with PRIMA1. The interaction with PRIMA1 is required to anchor it to the basal lamina of cells and organize into tetramers. Has been found in central nervous system and muscle. Found in embryonic liver and spleen but not in adult liver.

The protein localises to the synapse. Its subcellular location is the secreted. It localises to the cell membrane. The catalysed reaction is acetylcholine + H2O = choline + acetate + H(+). In terms of biological role, terminates signal transduction at the neuromuscular junction by rapid hydrolysis of the acetylcholine released into the synaptic cleft. This Rattus norvegicus (Rat) protein is Acetylcholinesterase (Ache).